We begin with the raw amino-acid sequence, 56 residues long: Large ribosomal subunit protein bL32 (56 aa).

Residues 1 to 21 (MGVPQRRQSHARKNKRRSEWR) form a disordered region. The segment covering 7–19 (RQSHARKNKRRSE) has biased composition (basic residues).

Belongs to the bacterial ribosomal protein bL32 family.

The polypeptide is Large ribosomal subunit protein bL32 (Syntrophomonas wolfei subsp. wolfei (strain DSM 2245B / Goettingen)).